Reading from the N-terminus, the 692-residue chain is Elongation factor G (692 aa).

The region spanning 8–282 is the tr-type G domain; sequence EKTRNIGIMA…AIVDYLPAPT (275 aa). Residues 17–24, 81–85, and 135–138 contribute to the GTP site; these read AHIDAGKT, DTPGH, and NKMD.

It belongs to the TRAFAC class translation factor GTPase superfamily. Classic translation factor GTPase family. EF-G/EF-2 subfamily.

The protein resides in the cytoplasm. In terms of biological role, catalyzes the GTP-dependent ribosomal translocation step during translation elongation. During this step, the ribosome changes from the pre-translocational (PRE) to the post-translocational (POST) state as the newly formed A-site-bound peptidyl-tRNA and P-site-bound deacylated tRNA move to the P and E sites, respectively. Catalyzes the coordinated movement of the two tRNA molecules, the mRNA and conformational changes in the ribosome. The chain is Elongation factor G from Pelotomaculum thermopropionicum (strain DSM 13744 / JCM 10971 / SI).